Reading from the N-terminus, the 113-residue chain is UPF0102 protein Ccon26_01140 (113 aa).

Belongs to the UPF0102 family.

This chain is UPF0102 protein Ccon26_01140, found in Campylobacter concisus (strain 13826).